Reading from the N-terminus, the 270-residue chain is uncharacterized protein (270 aa).

A signal peptide spans Met-1 to Gly-22. Cys-23 is lipidated: N-palmitoyl cysteine. Cys-23 carries S-diacylglycerol cysteine lipidation.

This sequence belongs to the staphylococcal tandem lipoprotein family.

The protein localises to the cell membrane. This is an uncharacterized protein from Staphylococcus aureus (strain N315).